The chain runs to 444 residues: Phosphoglucosamine mutase (444 aa).

Ser102 serves as the catalytic Phosphoserine intermediate. Mg(2+) is bound by residues Ser102, Asp239, Asp241, and Asp243. Ser102 is modified (phosphoserine).

The protein belongs to the phosphohexose mutase family. The cofactor is Mg(2+). Post-translationally, activated by phosphorylation.

It catalyses the reaction alpha-D-glucosamine 1-phosphate = D-glucosamine 6-phosphate. Functionally, catalyzes the conversion of glucosamine-6-phosphate to glucosamine-1-phosphate. In Saccharopolyspora erythraea (strain ATCC 11635 / DSM 40517 / JCM 4748 / NBRC 13426 / NCIMB 8594 / NRRL 2338), this protein is Phosphoglucosamine mutase.